The primary structure comprises 72 residues: Translation initiation factor IF-1 (72 aa).

Positions 1–72 constitute an S1-like domain; that stretch reads MAKDDVIEID…DKGRITYRYK (72 aa).

Belongs to the IF-1 family. Component of the 30S ribosomal translation pre-initiation complex which assembles on the 30S ribosome in the order IF-2 and IF-3, IF-1 and N-formylmethionyl-tRNA(fMet); mRNA recruitment can occur at any time during PIC assembly.

The protein localises to the cytoplasm. Functionally, one of the essential components for the initiation of protein synthesis. Stabilizes the binding of IF-2 and IF-3 on the 30S subunit to which N-formylmethionyl-tRNA(fMet) subsequently binds. Helps modulate mRNA selection, yielding the 30S pre-initiation complex (PIC). Upon addition of the 50S ribosomal subunit IF-1, IF-2 and IF-3 are released leaving the mature 70S translation initiation complex. This Campylobacter fetus subsp. fetus (strain 82-40) protein is Translation initiation factor IF-1.